Reading from the N-terminus, the 562-residue chain is Arginine--tRNA ligase (562 aa).

Positions 129–139 (ANPTGPLHVGH) match the 'HIGH' region motif.

It belongs to the class-I aminoacyl-tRNA synthetase family. Monomer.

The protein resides in the cytoplasm. It carries out the reaction tRNA(Arg) + L-arginine + ATP = L-arginyl-tRNA(Arg) + AMP + diphosphate. The protein is Arginine--tRNA ligase of Xylella fastidiosa (strain M23).